The chain runs to 450 residues: Protein W (450 aa).

A disordered region spans residues 53-92 (SGESEQVEGGMSKDDGDVERRNLEDLSSTSPTDGTIGKRV). Positions 63-76 (MSKDDGDVERRNLE) are enriched in basic and acidic residues. Phosphoserine; by host is present on S257. Positions 265 to 324 (ISPEDEEPSSVGGKPNESIGRTIEGQSIRDNLQAKDNKSTDVPGAGPKDSAVKEEPPQKR) are disordered. Residue S350 is modified to Phosphoserine; by host. Disordered stretches follow at residues 384 to 403 (VQTA…RGIP) and 429 to 450 (PGMF…RMSN). The span at 438 to 450 (TKKARVSMRRMSN) shows a compositional bias: basic residues. A Nuclear localization signal motif is present at residues 439-442 (KKAR).

Interacts with host STAT1.

The protein resides in the host nucleus. In terms of biological role, prevent the establishment of cellular antiviral state by blocking the interferon-alpha/beta (IFN-alpha/beta). Interacts with host STAT1 protein in the nucleus, blocking it's phosphorylation by IFN-alpha/beta. Also blocks antiviral state induced by Toll-like receptor 3/TLR3 binding to dsRNA. In Cynopterus brachyotis (Lesser short-nosed fruit bat), this protein is Protein W (P/V/C).